A 276-amino-acid chain; its full sequence is Large ribosomal subunit protein uL2 (276 aa).

The tract at residues 219–276 is disordered; sequence TVRGSVMNPNDHPHGGGEGKQPIGRKQQMTPWGKKARGIKTRDKKKASTSMIVRRRNG. The span at 252–276 shows a compositional bias: basic residues; sequence KKARGIKTRDKKKASTSMIVRRRNG.

Belongs to the universal ribosomal protein uL2 family. Part of the 50S ribosomal subunit. Forms a bridge to the 30S subunit in the 70S ribosome.

Functionally, one of the primary rRNA binding proteins. Required for association of the 30S and 50S subunits to form the 70S ribosome, for tRNA binding and peptide bond formation. It has been suggested to have peptidyltransferase activity; this is somewhat controversial. Makes several contacts with the 16S rRNA in the 70S ribosome. The protein is Large ribosomal subunit protein uL2 of Acholeplasma laidlawii (strain PG-8A).